Here is a 576-residue protein sequence, read N- to C-terminus: Vesicular glutamate transporter 1 (576 aa).

Residues 1-63 (MEFRKEEFKK…CTCFGLPRRY (63 aa)) lie on the Cytoplasmic side of the membrane. A helical transmembrane segment spans residues 64-84 (IIAIMSGLGFCISFGIRCNLG). The Vesicular portion of the chain corresponds to 85-116 (VAIVSMVNNNTVYKGNKIVIEQAQFTWDPETV). N-linked (GlcNAc...) asparagine glycosylation is present at Asn-93. Residues 117-137 (GMIHGSFFWGYIVTQIPGGYI) traverse the membrane as a helical segment. Over 138–140 (CQK) the chain is Cytoplasmic. A helical membrane pass occupies residues 141 to 161 (FAANRVFGFAIVATSTLNMLI). Residues 162–168 (PSAARVH) lie on the Vesicular side of the membrane. Residues 169 to 189 (FACVICVRILQGLVEGVTYPA) form a helical membrane-spanning segment. Topologically, residues 190–208 (CHGIWSKWAPPLERSRLAT) are cytoplasmic. The helical transmembrane segment at 209–229 (TAFCGSYAGAVVAMPLAGVLV) threads the bilayer. Residues 230–236 (QYSGWSS) lie on the Vesicular side of the membrane. The chain crosses the membrane as a helical span at residues 237 to 257 (VFYVYGSFGIMWYMFWILVSY). The Cytoplasmic segment spans residues 258–302 (ESPAIHPTISEEEKKYIEESIGESTGLMNPMAKFKAPWRKFFTSM). The chain crosses the membrane as a helical span at residues 303 to 323 (PVYAIIVANFCRSWTFYLLLI). Over 324-341 (SQPAYFEEVFGFEISKVG) the chain is Vesicular. A helical transmembrane segment spans residues 342 to 362 (LLSALPHLVMTIIVPIGGQIA). Over 363–378 (DFLRTKRIMSTTNVRK) the chain is Cytoplasmic. A helical transmembrane segment spans residues 379–399 (MMNCGGFGMEATLLLVVGYSH). Over 400–401 (SR) the chain is Vesicular. The helical transmembrane segment at 402–422 (GVAISFLVLAVGFSGFAISGF) threads the bilayer. The Cytoplasmic portion of the chain corresponds to 423–435 (NVNHLDIAPRYAS). Residues 436–456 (ILMGISNGVGTLSGMVCPLIV) form a helical membrane-spanning segment. Topologically, residues 457 to 469 (GAMTKHKTREEWQ) are vesicular. The chain crosses the membrane as a helical span at residues 470–490 (YVFLIASLVHYGGVLFYGIFA). The Cytoplasmic portion of the chain corresponds to 491–576 (SGEKQPWAEP…YGTVAERDLS (86 aa)). The interval 517-547 (ADESEEQSQAYGAYGSYGATQTTSQQNGGWT) is disordered. Residues 534–545 (GATQTTSQQNGG) are compositionally biased toward polar residues.

It belongs to the major facilitator superfamily. Sodium/anion cotransporter family. VGLUT subfamily.

The protein resides in the cytoplasmic vesicle. The protein localises to the secretory vesicle. It localises to the synaptic vesicle membrane. Its subcellular location is the cell membrane. It is found in the synapse. The protein resides in the synaptosome. The catalysed reaction is L-glutamate(out) = L-glutamate(in). It carries out the reaction chloride(in) = chloride(out). It catalyses the reaction 3 Na(+)(out) + phosphate(out) = 3 Na(+)(in) + phosphate(in). The enzyme catalyses phosphate(in) = phosphate(out). The catalysed reaction is K(+)(in) + H(+)(out) = K(+)(out) + H(+)(in). With respect to regulation, chloride channel activity is allosterically activated by lumenal H(+) and Cl(-) leading to synaptic vesicles acidification. The L-glutamate transport activity is allosterically activated by lumenal H(+) and Cl(-). The allosteric activation by H(+) efficiently prevents non-vesicular efflux across the plasma membrane, thereby restricting L-glutamate transport activity to acidic membranes such as synaptic vesicles. Functionally, multifunctional transporter that transports L-glutamate as well as multiple ions such as chloride, proton, potassium, sodium and phosphate. At the synaptic vesicle membrane, mainly functions as an uniporter which transports preferentially L-glutamate but also phosphate from the cytoplasm into synaptic vesicles at presynaptic nerve terminals of excitatory neural cells. The L-glutamate or phosphate uniporter activity is electrogenic and is driven by the proton electrochemical gradient, mainly by the electrical gradient established by the vacuolar H(+)-ATPase across the synaptic vesicle membrane. In addition, functions as a chloride channel that allows a chloride permeation through the synaptic vesicle membrane that affects the proton electrochemical gradient and promotes synaptic vesicles acidification. Moreover, may function as a K(+)/H(+) antiport allowing to maintain the electrical gradient and to decrease chemical gradient and therefore sustain vesicular glutamate uptake. The vesicular K(+)/H(+) antiport activity is electroneutral. At the plasma membrane, following exocytosis, functions as a symporter of Na(+) and phosphate from the extracellular space to the cytoplasm allowing synaptic phosphate homeostasis regulation. The symporter activity is driven by an inside negative membrane potential and is electrogenic. Is necessary for synaptic signaling of visual-evoked responses from photoreceptors. This Xenopus tropicalis (Western clawed frog) protein is Vesicular glutamate transporter 1.